The sequence spans 105 residues: Large ribosomal subunit protein bL21 (105 aa).

The protein belongs to the bacterial ribosomal protein bL21 family. Part of the 50S ribosomal subunit. Contacts protein L20.

Its function is as follows. This protein binds to 23S rRNA in the presence of protein L20. In Porphyromonas gingivalis (strain ATCC BAA-308 / W83), this protein is Large ribosomal subunit protein bL21.